The primary structure comprises 296 residues: dTDP-rhamnosyl transferase RfbF (296 aa).

The protein belongs to the glycosyltransferase 2 family.

Its pathway is bacterial outer membrane biogenesis; lipopolysaccharide biosynthesis. This chain is dTDP-rhamnosyl transferase RfbF (rfbF), found in Shigella flexneri.